The chain runs to 317 residues: Alkylsulfatase (317 aa).

His78 provides a ligand contact to substrate. 2 residues coordinate Fe cation: His105 and Asp107. Val108 serves as a coordination point for substrate. Thr132 contributes to the 2-oxoglutarate binding site. His261 contacts Fe cation. 2-oxoglutarate contacts are provided by Arg272 and Arg276.

The protein belongs to the TfdA dioxygenase family. Homotetramer. Fe(2+) serves as cofactor.

Its function is as follows. Alpha-ketoglutarate-dependent dioxygenase that in vitro catalyzes the oxygenolytic release of sulfite from hexylsulfate. The chain is Alkylsulfatase from Acinetobacter baylyi (strain ATCC 33305 / BD413 / ADP1).